Consider the following 346-residue polypeptide: GTPase Obg (346 aa).

One can recognise an Obg domain in the interval 1 to 159 (MRFVDRCRLK…RELRLELKVL (159 aa)). A disordered region spans residues 122–147 (KGGRGNLHFKSPHDRAPRRAEPGEPG). The span at 132–147 (SPHDRAPRRAEPGEPG) shows a compositional bias: basic and acidic residues. The OBG-type G domain occupies 160-336 (ADVGLLGFPN…LVRELAALAR (177 aa)). GTP contacts are provided by residues 166–173 (GFPNAGKS), 191–195 (FTTLT), 218–221 (DIPG), 288–291 (TKAD), and 317–319 (SAA). Positions 173 and 193 each coordinate Mg(2+).

It belongs to the TRAFAC class OBG-HflX-like GTPase superfamily. OBG GTPase family. As to quaternary structure, monomer. Mg(2+) serves as cofactor.

It is found in the cytoplasm. Its function is as follows. An essential GTPase which binds GTP, GDP and possibly (p)ppGpp with moderate affinity, with high nucleotide exchange rates and a fairly low GTP hydrolysis rate. Plays a role in control of the cell cycle, stress response, ribosome biogenesis and in those bacteria that undergo differentiation, in morphogenesis control. The protein is GTPase Obg of Sorangium cellulosum (strain So ce56) (Polyangium cellulosum (strain So ce56)).